The chain runs to 78 residues: Defensin-like protein 308 (78 aa).

Residues 1–19 form the signal peptide; it reads MKTSAFFIAVLLILSCSSS. 3 cysteine pairs are disulfide-bonded: Cys31-Cys50, Cys37-Cys55, and Cys41-Cys57.

The protein belongs to the DEFL family.

Its subcellular location is the secreted. This is Defensin-like protein 308 from Arabidopsis thaliana (Mouse-ear cress).